The chain runs to 68 residues: Protein transport protein Sec61 subunit gamma (68 aa).

At 1-32 (MDQFQALIEPARQFSKDSYRLVKRCTKPDRKE) the chain is on the cytoplasmic side. A helical membrane pass occupies residues 33-61 (YQKIAMATAIGFAIMGFIGFFVKLIHIPI). Residues 62 to 68 (NNIIVGA) lie on the Extracellular side of the membrane.

The protein belongs to the SecE/SEC61-gamma family. As to quaternary structure, heterotrimeric complex composed of SEC61-alpha, SEC61-beta and SEC61-gamma. In terms of tissue distribution, expressed in the germline. Expression in the germline is regulated in a sex- and meiotic cycle stage-specific manner. Expressed in somatic tissues including the intestine and somatic gonad. Expressed in the intestine more highly in hermaprodites than in males. In hermaphrodites, weakly expressed in the spermatheca.

The protein localises to the endoplasmic reticulum membrane. Functionally, required for oocyte development and ovulation. Required for the translocation of secretory and transmembrane proteins into the endoplasmic reticulum in vitro. The sequence is that of Protein transport protein Sec61 subunit gamma from Caenorhabditis elegans.